The primary structure comprises 356 residues: 1-deoxy-D-xylulose 5-phosphate reductoisomerase (356 aa).

NADPH is bound by residues T7, G8, S9, I10, G31, N33, and N111. K112 contacts 1-deoxy-D-xylulose 5-phosphate. E113 contributes to the NADPH binding site. Mn(2+) is bound at residue D131. Positions 132, 133, 155, and 178 each coordinate 1-deoxy-D-xylulose 5-phosphate. E133 provides a ligand contact to Mn(2+). Position 184 (G184) interacts with NADPH. 1-deoxy-D-xylulose 5-phosphate-binding residues include S191, N196, K197, and E200. E200 is a Mn(2+) binding site.

This sequence belongs to the DXR family. The cofactor is Mg(2+). Mn(2+) serves as cofactor.

It catalyses the reaction 2-C-methyl-D-erythritol 4-phosphate + NADP(+) = 1-deoxy-D-xylulose 5-phosphate + NADPH + H(+). It functions in the pathway isoprenoid biosynthesis; isopentenyl diphosphate biosynthesis via DXP pathway; isopentenyl diphosphate from 1-deoxy-D-xylulose 5-phosphate: step 1/6. Its function is as follows. Catalyzes the NADPH-dependent rearrangement and reduction of 1-deoxy-D-xylulose-5-phosphate (DXP) to 2-C-methyl-D-erythritol 4-phosphate (MEP). The polypeptide is 1-deoxy-D-xylulose 5-phosphate reductoisomerase (Campylobacter jejuni subsp. doylei (strain ATCC BAA-1458 / RM4099 / 269.97)).